A 309-amino-acid chain; its full sequence is MESIRAGVSRERLTHLQQLEAESIHIIREVAAEFENPVMMYSIGKDSSVMLHLARKAFYPGKIPFPLLHVDTDWKFKEMITFRDETAKKYGLDLIVHKNPDGLAMGINPFVHGSGKHTDIMKTEGLKQALNQHGFDAAFGGARRDEEKSRAKERVYSFRDKSHRWDPKNQRPELWRVYNSQVNKGESIRVFPLSNWTELDIWQYIYLENIDIVPLYFAAVRPVVERNGIKIMVDDERMPIGPEDEVKQELVRFRTLGCYPLTGAIESDATTLPEIIEEMLLTTSSERQGRLIDHDQAGSMEQKKRQGYF.

It belongs to the PAPS reductase family. CysD subfamily. As to quaternary structure, heterodimer composed of CysD, the smaller subunit, and CysN.

The catalysed reaction is sulfate + ATP + H(+) = adenosine 5'-phosphosulfate + diphosphate. It participates in sulfur metabolism; hydrogen sulfide biosynthesis; sulfite from sulfate: step 1/3. With CysN forms the ATP sulfurylase (ATPS) that catalyzes the adenylation of sulfate producing adenosine 5'-phosphosulfate (APS) and diphosphate, the first enzymatic step in sulfur assimilation pathway. APS synthesis involves the formation of a high-energy phosphoric-sulfuric acid anhydride bond driven by GTP hydrolysis by CysN coupled to ATP hydrolysis by CysD. The polypeptide is Sulfate adenylyltransferase subunit 2 (Aeromonas salmonicida (strain A449)).